The sequence spans 483 residues: Alginate biosynthesis protein AlgA (483 aa).

It belongs to the mannose-6-phosphate isomerase type 2 family. In terms of assembly, monomer. Requires Co(2+) as cofactor.

The enzyme catalyses D-mannose 6-phosphate = D-fructose 6-phosphate. It catalyses the reaction alpha-D-mannose 1-phosphate + GTP + H(+) = GDP-alpha-D-mannose + diphosphate. It participates in nucleotide-sugar biosynthesis; GDP-alpha-D-mannose biosynthesis; GDP-alpha-D-mannose from alpha-D-mannose 1-phosphate (GTP route): step 1/1. Its pathway is nucleotide-sugar biosynthesis; GDP-alpha-D-mannose biosynthesis; alpha-D-mannose 1-phosphate from D-fructose 6-phosphate: step 1/2. In terms of biological role, produces a precursor for alginate polymerization. The alginate layer provides a protective barrier against host immune defenses and antibiotics. The sequence is that of Alginate biosynthesis protein AlgA (algA) from Pseudomonas fluorescens.